Consider the following 357-residue polypeptide: Peptide chain release factor 1 (357 aa).

Q236 carries the N5-methylglutamine modification.

The protein belongs to the prokaryotic/mitochondrial release factor family. In terms of processing, methylated by PrmC. Methylation increases the termination efficiency of RF1.

Its subcellular location is the cytoplasm. Functionally, peptide chain release factor 1 directs the termination of translation in response to the peptide chain termination codons UAG and UAA. The protein is Peptide chain release factor 1 of Mycolicibacterium gilvum (strain PYR-GCK) (Mycobacterium gilvum (strain PYR-GCK)).